Consider the following 269-residue polypeptide: Formamidopyrimidine-DNA glycosylase (269 aa).

The Schiff-base intermediate with DNA role is filled by Pro-2. The Proton donor role is filled by Glu-3. Catalysis depends on Lys-57, which acts as the Proton donor; for beta-elimination activity. His-90, Arg-109, and Lys-150 together coordinate DNA. An FPG-type zinc finger spans residues 235–269 (FVYGRAGEPCRICGEQIESIKLGQRSTFFCRHCQY). Catalysis depends on Arg-259, which acts as the Proton donor; for delta-elimination activity.

It belongs to the FPG family. As to quaternary structure, monomer. The cofactor is Zn(2+).

The catalysed reaction is Hydrolysis of DNA containing ring-opened 7-methylguanine residues, releasing 2,6-diamino-4-hydroxy-5-(N-methyl)formamidopyrimidine.. It carries out the reaction 2'-deoxyribonucleotide-(2'-deoxyribose 5'-phosphate)-2'-deoxyribonucleotide-DNA = a 3'-end 2'-deoxyribonucleotide-(2,3-dehydro-2,3-deoxyribose 5'-phosphate)-DNA + a 5'-end 5'-phospho-2'-deoxyribonucleoside-DNA + H(+). In terms of biological role, involved in base excision repair of DNA damaged by oxidation or by mutagenic agents. Acts as a DNA glycosylase that recognizes and removes damaged bases. Has a preference for oxidized purines, such as 7,8-dihydro-8-oxoguanine (8-oxoG). Has AP (apurinic/apyrimidinic) lyase activity and introduces nicks in the DNA strand. Cleaves the DNA backbone by beta-delta elimination to generate a single-strand break at the site of the removed base with both 3'- and 5'-phosphates. In Photorhabdus laumondii subsp. laumondii (strain DSM 15139 / CIP 105565 / TT01) (Photorhabdus luminescens subsp. laumondii), this protein is Formamidopyrimidine-DNA glycosylase.